We begin with the raw amino-acid sequence, 190 residues long: Small ribosomal subunit protein mS23 (190 aa).

A2 bears the N-acetylalanine mark. K83 bears the N6-succinyllysine mark. N6-acetyllysine is present on K102. The segment at K137–P190 is disordered.

Belongs to the mitochondrion-specific ribosomal protein mS23 family. In terms of assembly, component of the mitochondrial ribosome small subunit (28S) which comprises a 12S rRNA and about 30 distinct proteins.

Its subcellular location is the mitochondrion. This Bos taurus (Bovine) protein is Small ribosomal subunit protein mS23.